The primary structure comprises 339 residues: MLQEAIKKIVLKENLDEKEAYEVMGEIMSGNGTPSLIGGLLIGLRLKGESVEEITGFAKAMRDNAVKLQLDADYVIDTCGTGGDGGKTFNISTAVAIIASAAGVKVAKHGNRAVSSKSGSADVLRELGFNIEAEPMYTKKMIEEKGMGFLFAPLYHRAMKNVLPIRRELGTRTVFNLLGPLTNPAPIKGQVLGVYDRNLTHPIAEVLLKLGIERAMVVHGFDGLDEITTTAPTYVSEVKEGEIFDYVIDPLDFDIPYSKPEDLKGKGPRENAEIIIDILKGQKGPRRDIVVLNTAAALYVGKLVENLKEGVELAERLLNSGLAYERFLEILGYQRRIIS.

Residues G80, 83-84, T88, 90-93, 108-116, and S120 contribute to the 5-phospho-alpha-D-ribose 1-diphosphate site; these read GD, NIST, and KHGNRAVSS. G80 serves as a coordination point for anthranilate. S92 is a binding site for Mg(2+). N111 contributes to the anthranilate binding site. Anthranilate is bound at residue R166. Positions 225 and 226 each coordinate Mg(2+).

This sequence belongs to the anthranilate phosphoribosyltransferase family. As to quaternary structure, homodimer. Mg(2+) serves as cofactor.

The enzyme catalyses N-(5-phospho-beta-D-ribosyl)anthranilate + diphosphate = 5-phospho-alpha-D-ribose 1-diphosphate + anthranilate. The protein operates within amino-acid biosynthesis; L-tryptophan biosynthesis; L-tryptophan from chorismate: step 2/5. Functionally, catalyzes the transfer of the phosphoribosyl group of 5-phosphorylribose-1-pyrophosphate (PRPP) to anthranilate to yield N-(5'-phosphoribosyl)-anthranilate (PRA). This chain is Anthranilate phosphoribosyltransferase, found in Caldanaerobacter subterraneus subsp. tengcongensis (strain DSM 15242 / JCM 11007 / NBRC 100824 / MB4) (Thermoanaerobacter tengcongensis).